A 72-amino-acid chain; its full sequence is Variant surface glycoprotein MITAT 1.1000BC (72 aa).

Aspartate 50 carries GPI-anchor amidated aspartate lipidation. A propeptide spans 51–72 (GSFLVNKKFALMVYDFVSLLAF) (removed in mature form).

It localises to the cell membrane. Functionally, VSG forms a coat on the surface of the parasite. The trypanosome evades the immune response of the host by expressing a series of antigenically distinct VSGs from an estimated 1000 VSG genes. The polypeptide is Variant surface glycoprotein MITAT 1.1000BC (Trypanosoma brucei brucei).